Here is a 351-residue protein sequence, read N- to C-terminus: Magnesium-protoporphyrin IX monomethyl ester [oxidative] cyclase 1 (351 aa).

It belongs to the AcsF family. It depends on Fe cation as a cofactor.

The enzyme catalyses Mg-protoporphyrin IX 13-monomethyl ester + 3 NADPH + 3 O2 + 2 H(+) = 3,8-divinyl protochlorophyllide a + 3 NADP(+) + 5 H2O. It participates in porphyrin-containing compound metabolism; chlorophyll biosynthesis (light-independent). Functionally, catalyzes the formation of the isocyclic ring in chlorophyll biosynthesis. Mediates the cyclase reaction, which results in the formation of divinylprotochlorophyllide (Pchlide) characteristic of all chlorophylls from magnesium-protoporphyrin IX 13-monomethyl ester (MgPMME). This Nostoc sp. (strain PCC 7120 / SAG 25.82 / UTEX 2576) protein is Magnesium-protoporphyrin IX monomethyl ester [oxidative] cyclase 1.